We begin with the raw amino-acid sequence, 456 residues long: Ribosomal protein uS12 methylthiotransferase RimO (456 aa).

The MTTase N-terminal domain maps to 11–126 (PKVGFVSLGC…VMQAVHTHLP (116 aa)). Cysteine 20, cysteine 56, cysteine 85, cysteine 157, cysteine 161, and cysteine 164 together coordinate [4Fe-4S] cluster. The 242-residue stretch at 143–384 (LTPKHYAYLK…MEVAEEVSAR (242 aa)) folds into the Radical SAM core domain. Residues 387 to 456 (QRKVGQTLRV…DGHDLWGEVA (70 aa)) enclose the TRAM domain.

It belongs to the methylthiotransferase family. RimO subfamily. [4Fe-4S] cluster serves as cofactor.

It is found in the cytoplasm. The catalysed reaction is L-aspartate(89)-[ribosomal protein uS12]-hydrogen + (sulfur carrier)-SH + AH2 + 2 S-adenosyl-L-methionine = 3-methylsulfanyl-L-aspartate(89)-[ribosomal protein uS12]-hydrogen + (sulfur carrier)-H + 5'-deoxyadenosine + L-methionine + A + S-adenosyl-L-homocysteine + 2 H(+). Catalyzes the methylthiolation of an aspartic acid residue of ribosomal protein uS12. This Cupriavidus metallidurans (strain ATCC 43123 / DSM 2839 / NBRC 102507 / CH34) (Ralstonia metallidurans) protein is Ribosomal protein uS12 methylthiotransferase RimO.